We begin with the raw amino-acid sequence, 174 residues long: Probable NAD(P)H dehydrogenase subunit CRR3, chloroplastic (174 aa).

The transit peptide at 1 to 54 directs the protein to the chloroplast; that stretch reads MAVLSTIYSITRASTPTMASLTNDSPSPLPSSSPSKLPSPTSPSKKPLKLRQVS. Residues 14–24 are compositionally biased toward polar residues; sequence STPTMASLTND. The interval 14 to 71 is disordered; sequence STPTMASLTNDSPSPLPSSSPSKLPSPTSPSKKPLKLRQVSKQMGSQNQQRRGNKPSI. The segment covering 30 to 45 has biased composition (low complexity); sequence PSSSPSKLPSPTSPSK. Over residues 53–64 the composition is skewed to polar residues; sequence VSKQMGSQNQQR. A helical transmembrane segment spans residues 140–160; that stretch reads FTIQWILPIWIMSLLVACGVI.

It localises to the plastid. The protein resides in the chloroplast thylakoid membrane. Functionally, probable subunit of the chloroplast NAD(P)H dehydrogenase (NDH) complex of the photosynthetic electron transport chain. Required for both formation and activity of NDH. May function in assembly or stabilization of the NDH complex. The polypeptide is Probable NAD(P)H dehydrogenase subunit CRR3, chloroplastic (Arabidopsis thaliana (Mouse-ear cress)).